Reading from the N-terminus, the 141-residue chain is Hemoglobin subunit alpha-1/2 (141 aa).

The 141-residue stretch at 1–141 folds into the Globin domain; it reads VLSPADKKNV…VSTVLTSKYR (141 aa). A Phosphoserine modification is found at Ser-3. Residues Lys-7 and Lys-11 each carry the N6-succinyllysine modification. Lys-16 is subject to N6-acetyllysine; alternate. Position 16 is an N6-succinyllysine; alternate (Lys-16). Tyr-24 carries the post-translational modification Phosphotyrosine. At Ser-35 the chain carries Phosphoserine. Lys-40 carries the post-translational modification N6-succinyllysine. Ser-49 carries the post-translational modification Phosphoserine. Residue His-58 participates in O2 binding. His-87 serves as a coordination point for heme b. Position 102 is a phosphoserine (Ser-102). Thr-108 is modified (phosphothreonine). Phosphoserine occurs at positions 124 and 131. Phosphothreonine occurs at positions 134 and 137. A Phosphoserine modification is found at Ser-138.

The protein belongs to the globin family. Heterotetramer of two alpha chains and two beta chains. Red blood cells.

Involved in oxygen transport from the lung to the various peripheral tissues. This is Hemoglobin subunit alpha-1/2 from Mandrillus sphinx (Mandrill).